The following is a 101-amino-acid chain: Secreted enzymes activator (101 aa).

Residues 1–10 (MSRRRRRASA) show a composition bias toward basic residues. 2 disordered regions span residues 1 to 26 (MSRR…PYGS) and 45 to 101 (TRLA…NGRG). The span at 45–60 (TRLAASSRASRAAVGS) shows a compositional bias: low complexity. The H-T-H motif DNA-binding region spans 55–74 (RAAVGSFDGAKNRPASSRRQ).

Increases the production of several extracellular enzymes, like alkaline phosphatase, amylase, protease or lipase. When present in high concentrations, delays the production of pigments and sporulation. This chain is Secreted enzymes activator (saf), found in Streptomyces griseus.